Reading from the N-terminus, the 794-residue chain is Zinc finger protein 148 (794 aa).

Lysine 6 participates in a covalent cross-link: Glycyl lysine isopeptide (Lys-Gly) (interchain with G-Cter in SUMO2). At serine 51 the chain carries Phosphoserine. Glycyl lysine isopeptide (Lys-Gly) (interchain with G-Cter in SUMO2) cross-links involve residues lysine 88, lysine 115, and lysine 132. A C2H2-type 1 zinc finger spans residues 171–193 (HVCEHCNAAFRTNYHLQRHVFIH). Threonine 194 bears the Phosphothreonine mark. 2 C2H2-type zinc fingers span residues 199-221 (FQCSQCDMRFIQKYLLQRHEKIH) and 227-249 (FRCDECGMRFIQKYHMERHKRTH). Serine 250 bears the Phosphoserine mark. The C2H2-type 4 zinc-finger motif lies at 255 to 278 (YQCEYCLQYFSRTDRVLKHKRMCH). Lysine 291 participates in a covalent cross-link: Glycyl lysine isopeptide (Lys-Gly) (interchain with G-Cter in SUMO2). Residues 298 to 336 (EEDSGFSTSPKDNSLPKKKRQKTEKKSSGMDKESVLDKS) form a disordered region. 2 positions are modified to phosphoserine: serine 301 and serine 306. A Glycyl lysine isopeptide (Lys-Gly) (interchain with G-Cter in SUMO2) cross-link involves residue lysine 308. Positions 321–336 (EKKSSGMDKESVLDKS) are enriched in basic and acidic residues. Lysine 356 is covalently cross-linked (Glycyl lysine isopeptide (Lys-Gly) (interchain with G-Cter in SUMO1); alternate). Lysine 356 participates in a covalent cross-link: Glycyl lysine isopeptide (Lys-Gly) (interchain with G-Cter in SUMO2); alternate. Residue lysine 402 forms a Glycyl lysine isopeptide (Lys-Gly) (interchain with G-Cter in SUMO2) linkage. A Phosphoserine modification is found at serine 412. Residues lysine 421 and lysine 424 each participate in a glycyl lysine isopeptide (Lys-Gly) (interchain with G-Cter in SUMO2) cross-link. A compositionally biased stretch (polar residues) spans 574–588 (NSSDVPEVTQSENVG). The tract at residues 574–599 (NSSDVPEVTQSENVGSSSQASSSDKA) is disordered. Lysine 607 carries the post-translational modification N6-acetyllysine. A phosphoserine mark is found at serine 665 and serine 784.

It belongs to the krueppel C2H2-type zinc-finger protein family. Interacts with HNRNPDL. Interacts with the 5FMC complex; the interaction requires association with CHTOP. Interacts with CAVIN1. In terms of processing, sumoylated with SUMO2. Desumoylated by SENP3, resulting in the stimulation of transcription of its target genes. Strong expression detected in brain, lung, liver and kidney, with lower levels detected in spleen, skeletal muscle, testis and heart.

It localises to the nucleus. Its function is as follows. Involved in transcriptional regulation. Represses the transcription of a number of genes including gastrin, stromelysin and enolase. Binds to the G-rich box in the enhancer region of these genes. The polypeptide is Zinc finger protein 148 (Znf148) (Mus musculus (Mouse)).